Here is a 490-residue protein sequence, read N- to C-terminus: Solute carrier family 2, facilitated glucose transporter member 1 (490 aa).

Residues 1-10 lie on the Cytoplasmic side of the membrane; that stretch reads MESGSKMTAR. The helical transmembrane segment at 11–32 threads the bilayer; it reads LMLAVGGAVLGSLQFGYNTGVI. Residues 33-65 are Extracellular-facing; that stretch reads NRPQKVIEDFYNHTWLYRYEEPISPATLTTLWS. N-linked (GlcNAc...) asparagine glycosylation is present at Asn-44. A helical transmembrane segment spans residues 66–86; sequence LSVAIFSVGGMIGSFSVGLFV. Topologically, residues 87-89 are cytoplasmic; sequence NRF. Residues 90–111 form a helical membrane-spanning segment; that stretch reads GRRNSMLMSNILAFLAAVLMGF. Over 112-119 the chain is Extracellular; the sequence is SKMALSFE. The chain crosses the membrane as a helical span at residues 120-143; it reads MLILGRFIIGLYSGLTTGFVPMYV. Residues 144–154 lie on the Cytoplasmic side of the membrane; it reads GEVSPTALRGA. Residues 155 to 175 form a helical membrane-spanning segment; sequence LGTFHQLGIVLGILIAQVFGL. Gln-160 is a D-glucose binding site. The Extracellular portion of the chain corresponds to 176–184; the sequence is DLIMGNDSL. The helical transmembrane segment at 185–205 threads the bilayer; the sequence is WPLLLGFIFVPALLQCIILPF. At 206–270 the chain is on the cytoplasmic side; that stretch reads APESPRFLLI…LFRSPMYRQP (65 aa). A helical membrane pass occupies residues 271 to 292; that stretch reads ILIAIVLQLSQQLSGINAVFYY. Residues 281 to 282 and Asn-287 each bind D-glucose; that span reads QQ. At 293–305 the chain is on the extracellular side; the sequence is STSIFEKSGVEQP. A helical transmembrane segment spans residues 306 to 327; it reads VYATIGSGVVNTAFTVVSLFVV. Position 316 (Asn-316) interacts with D-glucose. Over 328–333 the chain is Cytoplasmic; the sequence is ERAGRR. Residues 334–354 traverse the membrane as a helical segment; that stretch reads TLHLIGLAGMAGCAILMTIAL. At 355–364 the chain is on the extracellular side; that stretch reads TLLDQMPWMS. A helical transmembrane segment spans residues 365–387; it reads YLSIVAIFGFVAFFEIGPGPIPW. Residues Glu-379 and Trp-387 each contribute to the D-glucose site. At 388–400 the chain is on the cytoplasmic side; sequence FIVAELFSQGPRP. The chain crosses the membrane as a helical span at residues 401 to 421; sequence AAFAVAGLSNWTSNFIVGMGF. At 422–428 the chain is on the extracellular side; that stretch reads QYIAQLC. Residues 429 to 449 traverse the membrane as a helical segment; the sequence is GSYVFIIFTVLLVLFFIFTYF. Over 450-490 the chain is Cytoplasmic; sequence KVPETKGRTFDEIAYRFRQGGASQSDKTPDEFHSLGADSQV. The tract at residues 470–490 is disordered; sequence GASQSDKTPDEFHSLGADSQV.

Belongs to the major facilitator superfamily. Sugar transporter (TC 2.A.1.1) family. Glucose transporter subfamily. Interacts with isoform 1 of BSG. In terms of tissue distribution, retinal cones (at protein level).

It localises to the cell membrane. The protein localises to the photoreceptor inner segment. The enzyme catalyses D-glucose(out) = D-glucose(in). In terms of biological role, facilitative glucose transporter, which is responsible for constitutive or basal glucose uptake. Has a very broad substrate specificity; can transport a wide range of aldoses including both pentoses and hexoses. Most important energy carrier of the brain: present at the blood-brain barrier and assures the energy-independent, facilitative transport of glucose into the brain. In association with BSG and NXNL1, promotes retinal cone survival by increasing glucose uptake into photoreceptors. Required for mesendoderm differentiation. This chain is Solute carrier family 2, facilitated glucose transporter member 1, found in Gallus gallus (Chicken).